A 345-amino-acid polypeptide reads, in one-letter code: PI-PLC X domain-containing protein 1 (345 aa).

One can recognise a PI-PLC X-box domain in the interval 52–228 (QLWDVPLHHL…QVIVSYEDEA (177 aa)).

In terms of tissue distribution, expressed at highest levels in brain and kidney. Also detected in stomach, thymus and skeletal muscle.

The protein resides in the cytoplasm. In Mus musculus (Mouse), this protein is PI-PLC X domain-containing protein 1 (Plcxd1).